The primary structure comprises 304 residues: Probable 5-dehydro-4-deoxyglucarate dehydratase (304 aa).

The protein belongs to the DapA family.

The catalysed reaction is 5-dehydro-4-deoxy-D-glucarate + H(+) = 2,5-dioxopentanoate + CO2 + H2O. Its pathway is carbohydrate acid metabolism; D-glucarate degradation; 2,5-dioxopentanoate from D-glucarate: step 2/2. This chain is Probable 5-dehydro-4-deoxyglucarate dehydratase, found in Methylobacterium radiotolerans (strain ATCC 27329 / DSM 1819 / JCM 2831 / NBRC 15690 / NCIMB 10815 / 0-1).